Here is a 271-residue protein sequence, read N- to C-terminus: NADPH-dependent 7-cyano-7-deazaguanine reductase (271 aa).

Residue I81–S83 participates in substrate binding. S83–K84 contacts NADPH. C177 acts as the Thioimide intermediate in catalysis. D184 serves as the catalytic Proton donor. A substrate-binding site is contributed by H216–E217. R245–G246 is an NADPH binding site.

This sequence belongs to the GTP cyclohydrolase I family. QueF type 2 subfamily. As to quaternary structure, homodimer.

It localises to the cytoplasm. It catalyses the reaction 7-aminomethyl-7-carbaguanine + 2 NADP(+) = 7-cyano-7-deazaguanine + 2 NADPH + 3 H(+). It participates in tRNA modification; tRNA-queuosine biosynthesis. Catalyzes the NADPH-dependent reduction of 7-cyano-7-deazaguanine (preQ0) to 7-aminomethyl-7-deazaguanine (preQ1). The sequence is that of NADPH-dependent 7-cyano-7-deazaguanine reductase from Xanthomonas campestris pv. campestris (strain B100).